The primary structure comprises 598 residues: Elongation factor 4 (598 aa).

One can recognise a tr-type G domain in the interval 2-184 (KNIRNFSIIA…EIVRKIPAPE (183 aa)). GTP-binding positions include 14–19 (DHGKST) and 131–134 (NKID).

The protein belongs to the TRAFAC class translation factor GTPase superfamily. Classic translation factor GTPase family. LepA subfamily.

It is found in the cell inner membrane. It carries out the reaction GTP + H2O = GDP + phosphate + H(+). In terms of biological role, required for accurate and efficient protein synthesis under certain stress conditions. May act as a fidelity factor of the translation reaction, by catalyzing a one-codon backward translocation of tRNAs on improperly translocated ribosomes. Back-translocation proceeds from a post-translocation (POST) complex to a pre-translocation (PRE) complex, thus giving elongation factor G a second chance to translocate the tRNAs correctly. Binds to ribosomes in a GTP-dependent manner. This Histophilus somni (strain 2336) (Haemophilus somnus) protein is Elongation factor 4.